Consider the following 870-residue polypeptide: DNA polymerase kappa (870 aa).

A UmuC domain is found at 103-358; it reads IVHIDMDAFY…LPIRKVSGIG (256 aa). Residues Asp107, Asp198, and Glu199 each contribute to the Mg(2+) site. 2 consecutive UBZ4-type zinc fingers follow at residues 621–651 and 776–806; these read ILTCPVCFRAQGCISLEALNKHVDECLDGPS and ALVCPVCNVEQKTSDLTLFNVHVDVCLNKSF. Residues Cys624, Cys627, His642, Cys646, Cys779, Cys782, His797, and Cys801 each coordinate Zn(2+). The segment at 816-858 is disordered; sequence NPVNQPKESSRSTGSSSGVQKAVTRTKRPGLMTKYSTSKKIKP.

The protein belongs to the DNA polymerase type-Y family. As to quaternary structure, interacts with REV1. Interacts with PCNA. It depends on Mg(2+) as a cofactor. Mn(2+) serves as cofactor. Detected at low levels in testis, spleen, prostate and ovary. Detected at very low levels in kidney, colon, brain, heart, liver, lung, placenta, pancreas and peripheral blood leukocytes.

It localises to the nucleus. It carries out the reaction DNA(n) + a 2'-deoxyribonucleoside 5'-triphosphate = DNA(n+1) + diphosphate. DNA polymerase specifically involved in DNA repair. Plays an important role in translesion synthesis, where the normal high-fidelity DNA polymerases cannot proceed and DNA synthesis stalls. Depending on the context, it inserts the correct base, but causes frequent base transitions, transversions and frameshifts. Lacks 3'-5' proofreading exonuclease activity. Forms a Schiff base with 5'-deoxyribose phosphate at abasic sites, but does not have lyase activity. The polypeptide is DNA polymerase kappa (POLK) (Homo sapiens (Human)).